Reading from the N-terminus, the 135-residue chain is uncharacterized protein (135 aa).

The segment at 1 to 80 is disordered; sequence MRSSSLPGAR…QRGSCASANA (80 aa). Residues 54-65 are compositionally biased toward gly residues; the sequence is GARGGGRRGWGG.

This is an uncharacterized protein from Homo sapiens (Human).